Consider the following 664-residue polypeptide: Methionine--tRNA ligase (664 aa).

Residues 13-23 (PYTNGPCHIGH) carry the 'HIGH' region motif. Zn(2+) contacts are provided by cysteine 144, cysteine 147, cysteine 156, and cysteine 160. The 'KMSKS' region signature appears at 327-331 (KFSKS). Lysine 330 is an ATP binding site. The tRNA-binding domain maps to 566-664 (EFGNLDIRIA…RPVKPGTKIR (99 aa)).

The protein belongs to the class-I aminoacyl-tRNA synthetase family. MetG type 1 subfamily. Homodimer. Requires Zn(2+) as cofactor.

Its subcellular location is the cytoplasm. The enzyme catalyses tRNA(Met) + L-methionine + ATP = L-methionyl-tRNA(Met) + AMP + diphosphate. In terms of biological role, is required not only for elongation of protein synthesis but also for the initiation of all mRNA translation through initiator tRNA(fMet) aminoacylation. In Methanoculleus marisnigri (strain ATCC 35101 / DSM 1498 / JR1), this protein is Methionine--tRNA ligase.